Reading from the N-terminus, the 343-residue chain is ATP-dependent (S)-NAD(P)H-hydrate dehydratase (343 aa).

A mitochondrion-targeting transit peptide spans 1–42; it reads MAVHACGAAAAVVALLSAAIALQWSPLYAVLQRALSLHTAHA. The YjeF C-terminal domain occupies 49–340; that stretch reads LFQLVRNIVP…TEVGTAFSRL (292 aa). Lys63 bears the N6-acetyllysine mark. Tyr81 carries the phosphotyrosine modification. (6S)-NADPHX contacts are provided by residues Gly149 and 202 to 208; that span reads NHVEFSR. Ser216 carries the phosphoserine modification. ATP-binding positions include 242-246 and 261-270; these read KGEQD and GSSRRCGGQG. Asp271 is a binding site for (6S)-NADPHX.

This sequence belongs to the NnrD/CARKD family. It depends on Mg(2+) as a cofactor.

It localises to the mitochondrion. The catalysed reaction is (6S)-NADHX + ATP = ADP + phosphate + NADH + H(+). It catalyses the reaction (6S)-NADPHX + ATP = ADP + phosphate + NADPH + H(+). Catalyzes the dehydration of the S-form of NAD(P)HX at the expense of ATP, which is converted to ADP. Together with NAD(P)HX epimerase, which catalyzes the epimerization of the S- and R-forms, the enzyme allows the repair of both epimers of NAD(P)HX, a damaged form of NAD(P)H that is a result of enzymatic or heat-dependent hydration. In Mus musculus (Mouse), this protein is ATP-dependent (S)-NAD(P)H-hydrate dehydratase.